A 147-amino-acid chain; its full sequence is 3-dehydroquinate dehydratase (147 aa).

Y25 acts as the Proton acceptor in catalysis. Residues N76, H82, and D89 each coordinate substrate. H102 functions as the Proton donor in the catalytic mechanism. Substrate-binding positions include 103-104 and R113; that span reads LS.

This sequence belongs to the type-II 3-dehydroquinase family. Homododecamer.

The enzyme catalyses 3-dehydroquinate = 3-dehydroshikimate + H2O. It functions in the pathway metabolic intermediate biosynthesis; chorismate biosynthesis; chorismate from D-erythrose 4-phosphate and phosphoenolpyruvate: step 3/7. Its function is as follows. Catalyzes a trans-dehydration via an enolate intermediate. The sequence is that of 3-dehydroquinate dehydratase from Nostoc sp. (strain PCC 7120 / SAG 25.82 / UTEX 2576).